Consider the following 207-residue polypeptide: N-(5'-phosphoribosyl)anthranilate isomerase (207 aa).

It belongs to the TrpF family.

It carries out the reaction N-(5-phospho-beta-D-ribosyl)anthranilate = 1-(2-carboxyphenylamino)-1-deoxy-D-ribulose 5-phosphate. It functions in the pathway amino-acid biosynthesis; L-tryptophan biosynthesis; L-tryptophan from chorismate: step 3/5. This chain is N-(5'-phosphoribosyl)anthranilate isomerase, found in Legionella pneumophila (strain Corby).